The sequence spans 477 residues: S-triazine hydrolase (477 aa).

2 stretches are compositionally biased toward low complexity: residues 38-73 and 120-132; these read SPTT…KSSS and PLSS…DPTT. 2 disordered regions span residues 38–77 and 120–143; these read SPTT…GVVH and PLSS…GSPF.

Belongs to the metallo-dependent hydrolases superfamily. ATZ/TRZ family.

It functions in the pathway xenobiotic degradation; melamine degradation. Functionally, hydrolytic deamination of the S-triazine substrate melamine. The sequence is that of S-triazine hydrolase (trzA) from Gordonia rubripertincta (Rhodococcus corallinus).